We begin with the raw amino-acid sequence, 343 residues long: tRNA N6-adenosine threonylcarbamoyltransferase (343 aa).

Fe cation contacts are provided by histidine 120 and histidine 124. Substrate-binding positions include 142–146, aspartate 175, glycine 188, aspartate 192, and asparagine 281; that span reads VVSGG. Position 310 (aspartate 310) interacts with Fe cation.

This sequence belongs to the KAE1 / TsaD family. Fe(2+) is required as a cofactor.

It localises to the cytoplasm. The catalysed reaction is L-threonylcarbamoyladenylate + adenosine(37) in tRNA = N(6)-L-threonylcarbamoyladenosine(37) in tRNA + AMP + H(+). Functionally, required for the formation of a threonylcarbamoyl group on adenosine at position 37 (t(6)A37) in tRNAs that read codons beginning with adenine. Is involved in the transfer of the threonylcarbamoyl moiety of threonylcarbamoyl-AMP (TC-AMP) to the N6 group of A37, together with TsaE and TsaB. TsaD likely plays a direct catalytic role in this reaction. This is tRNA N6-adenosine threonylcarbamoyltransferase from Bacillus thuringiensis subsp. konkukian (strain 97-27).